Consider the following 227-residue polypeptide: NADH-quinone oxidoreductase subunit C (227 aa).

The protein belongs to the complex I 30 kDa subunit family. In terms of assembly, NDH-1 is composed of 14 different subunits. Subunits NuoB, C, D, E, F, and G constitute the peripheral sector of the complex.

It is found in the cell inner membrane. The catalysed reaction is a quinone + NADH + 5 H(+)(in) = a quinol + NAD(+) + 4 H(+)(out). NDH-1 shuttles electrons from NADH, via FMN and iron-sulfur (Fe-S) centers, to quinones in the respiratory chain. The immediate electron acceptor for the enzyme in this species is believed to be ubiquinone. Couples the redox reaction to proton translocation (for every two electrons transferred, four hydrogen ions are translocated across the cytoplasmic membrane), and thus conserves the redox energy in a proton gradient. This chain is NADH-quinone oxidoreductase subunit C, found in Legionella pneumophila subsp. pneumophila (strain Philadelphia 1 / ATCC 33152 / DSM 7513).